Consider the following 338-residue polypeptide: MTRISLTRYLVEEQRKHNTIEPELRLLIEVVARACKAISNAVSKGALAGVLGSAGTGNVQGETQQKLDVIANEVLLDANEWGGHLAAMASEEMDSFYEIPNRYPKGEYLLLFDPLDGSSNIDVNVSIGTIFSVLHMHKPGQTVTEHDFMQPGTQQVAAGYAVYGPQTTLVLTVGNGVHMFTLDREAGSFVLTQSDVMIPEDTKEFAINMSNMRHWAPPVRRYIDECLAGDEGPRGKNFNMRWIASMVADVHRILTRGGVFMYPWDKREPEKPGKLRLMYEANPMAFLVEQAGGAATNGQQRILDVEPTKLHQRVSVILGSKNEVERVTRYHQEDAAKA.

Mg(2+) is bound by residues Glu-91, Asp-113, Leu-115, and Asp-116. Residues 116-119, Asn-208, and Lys-274 contribute to the substrate site; that span reads DGSS. Glu-280 contacts Mg(2+).

The protein belongs to the FBPase class 1 family. As to quaternary structure, homotetramer. Mg(2+) serves as cofactor.

The protein resides in the cytoplasm. The catalysed reaction is beta-D-fructose 1,6-bisphosphate + H2O = beta-D-fructose 6-phosphate + phosphate. Its pathway is carbohydrate biosynthesis; gluconeogenesis. This is Fructose-1,6-bisphosphatase class 1 1 from Cupriavidus metallidurans (strain ATCC 43123 / DSM 2839 / NBRC 102507 / CH34) (Ralstonia metallidurans).